The following is a 204-amino-acid chain: Dephospho-CoA kinase (204 aa).

The region spanning 3–200 is the DPCK domain; that stretch reads VVAITGGIGS…ETYMAFASQQ (198 aa). Residue 11–16 coordinates ATP; sequence GSGKTT.

Belongs to the CoaE family.

Its subcellular location is the cytoplasm. It catalyses the reaction 3'-dephospho-CoA + ATP = ADP + CoA + H(+). Its pathway is cofactor biosynthesis; coenzyme A biosynthesis; CoA from (R)-pantothenate: step 5/5. In terms of biological role, catalyzes the phosphorylation of the 3'-hydroxyl group of dephosphocoenzyme A to form coenzyme A. The chain is Dephospho-CoA kinase from Aeromonas hydrophila.